The following is a 1033-amino-acid chain: MEIQTAESNVICSIDIFESLSDSVDVAKKLVEKSQESNEAESTTDLRSIEAGFEGVVKQMGETLQSIPESTFDEEEYIGVVIQSLSNEMQNATIGDGSKSEMINNGQQKISAKHTPDIVSEQMEEDLYPTDPEFSYESYMMYSESQSQMTDIPDIPSKSTDVSRQRKHGNHSESQSLVTEIPDIPSQSTNVSSQRKHGNLSKSQSQSTEIPDIPSQSSNASSQRKYGNLSESLSMLPQVTQFMEPPYQAFICPLTKEIMEDPVTTETGVTCERQAVIEWFDSFGNSDEINCPVTGQKLTTELSANVVLKTIIQEWKVRNEAARIKVAHAALSLGGSESMVIDALRDLQMTCEGKEYNKVQVREAGIIQLLDRYLTYRSKDVRFELLKFLRTLADEETDDGKEMIVKTITMSCVIKLLGSSHQPVRHAAQALLLELSKSQHACEKIGTARGAILMLVTAKYNRELDSFASETSDQILRNLEKCPENIKQMAESGLLEPLLGHLAEGSEETQVAMAAYLVEIDIGHEKKTYVAEKACPALIGLVQSENIDARRAAFKALAHISLYHPNNKILVEVGIIKIMVEEMFTKRVFSDLMNSRNEAATILANILESGLEHETFEVNTHGHTLGSDYFVYNIIHMLKNSSPDDLNIDLIRILLSLSKSPRAMATIVSVIKETDASFAMIELINNPHDELGVGALKLLIALTPYIGHTLSERLCKTRGQPENLIQCPVEANQITEKHAVSAKLLAKLPHQNLTLNLALVNESIVSEILHAIHLIQRSGARTSRYATDFLEGLVGILVRFTTTLYEPQMMYLARNHDLTSVFVDLLMKTSSDEVQRLSATGLENLSSTTMTLSRPPQPRSTKFMGSLSMPRSFSLRSSKKKQIEICAIHRGVCSAKNTFCLVEANAITKLLACLQSDKVEVVESALAAICTLLDDKVEVEKSLSMLSEMNAVQLILNAVKEHKKESLLQKAFWMIDKFIIRGGDKYASEISQDRMLSGMLVSAFHRGDGNTRQMAENILRRLDKMPSFSTYIT.

The tract at residues 145–226 (SQSQMTDIPD…SSNASSQRKY (82 aa)) is disordered. Residues 200–226 (LSKSQSQSTEIPDIPSQSSNASSQRKY) show a composition bias toward polar residues. Positions 245 to 322 (PPYQAFICPL…QEWKVRNEAA (78 aa)) constitute a U-box domain. ARM repeat units follow at residues 483-522 (PENIKQMAESGLLEPLLGHLAEGSEETQVAMAAYLVEIDI), 523-562 (GHEKKTYVAEKACPALIGLVQSENIDARRAAFKALAHISL), 564-608 (HPNN…NILE), 610-659 (GLEH…SLSK), and 665-704 (ATIVSVIKETDASFAMIELINNPHDELGVGALKLLIALTP).

The enzyme catalyses S-ubiquitinyl-[E2 ubiquitin-conjugating enzyme]-L-cysteine + [acceptor protein]-L-lysine = [E2 ubiquitin-conjugating enzyme]-L-cysteine + N(6)-ubiquitinyl-[acceptor protein]-L-lysine.. The protein operates within protein modification; protein ubiquitination. Functionally, functions as an E3 ubiquitin ligase. In Arabidopsis thaliana (Mouse-ear cress), this protein is Putative U-box domain-containing protein 42 (PUB42).